The chain runs to 275 residues: Epidermal growth factor-like protein 7 (275 aa).

The N-terminal stretch at 1–21 (MWGSGELLVAWFLVLAADGTT) is a signal peptide. In terms of domain architecture, EMI spans 28–105 (SRRVCTVGIS…TSGLPGACGA (78 aa)). 8 disulfide bridges follow: C32-C90, C57-C63, C89-C103, C108-C118, C112-C124, C126-C135, C142-C153, and C149-C162. Residues 104 to 136 (GAAICQPPCGNGGSCIRPGHCRCPVGWQGDTCQ) form the EGF-like 1 domain. The Cell attachment site signature appears at 131–133 (QGD). Residues 138–178 (DVDECSTGEASCPQRCVNTVGSYWCQGWEGQSPSADGTRCL) form the EGF-like 2; calcium-binding domain. A disordered region spans residues 173–193 (DGTRCLSKEGPSPVAPNPTAG). Positions 196 to 220 (SMAREEVYRLQARVDVLEQKLQLVL) form a coiled coil.

As to quaternary structure, interacts with ITGAV/ITGB3 in an RGD-dependent manner, increasing endothelial cell's motility. In terms of tissue distribution, expressed specifically by endothelial cells of the highly vascularized organs heart, lung and kidney.

Its subcellular location is the secreted. It localises to the extracellular space. Regulates vascular tubulogenesis in vivo. Inhibits platelet-derived growth factor (PDGF)-BB-induced smooth muscle cell migration and promotes endothelial cell adhesion to the extracellular matrix and angiogenesis. This Mus musculus (Mouse) protein is Epidermal growth factor-like protein 7 (Egfl7).